The primary structure comprises 102 residues: Putative septation protein SpoVG (102 aa).

Residues 83-102 (TDEVIPDKNATSDNEESDEA) form a disordered region.

Belongs to the SpoVG family.

Could be involved in septation. The chain is Putative septation protein SpoVG from Staphylococcus epidermidis (strain ATCC 35984 / DSM 28319 / BCRC 17069 / CCUG 31568 / BM 3577 / RP62A).